Here is an 857-residue protein sequence, read N- to C-terminus: A-kinase anchor protein 1, mitochondrial (857 aa).

A mitochondrion-targeting transit peptide spans 1 to 29; sequence MAIQLRSLFPLALPGMLALLGWWWFFSRK. At serine 55 the chain carries Phosphoserine. The tract at residues 65 to 121 is disordered; sequence VAPTVTQPPGREEQRCVDKPSTEPLALPRTRQVRRRSESSGNLPSVADTRSQPGPCR. Basic and acidic residues predominate over residues 74–85; it reads GREEQRCVDKPS. Serine 101, serine 103, and serine 164 each carry phosphoserine. The span at 103–116 shows a compositional bias: polar residues; the sequence is SSGNLPSVADTRSQ. Disordered regions lie at residues 165 to 198 and 260 to 303; these read ALGK…GDAV and FVEP…VPEN. Residues 286 to 299 show a composition bias toward basic and acidic residues; that stretch reads SDRDLAGELDKDET. The tract at residues 306–319 is PKA-RII subunit binding domain; it reads IKQAAFQLISQVIL. Disordered regions lie at residues 336–437, 466–497, and 512–554; these read QVHP…NPRG, STSG…TQPF, and EDGW…QAGS. The segment covering 354–379 has biased composition (polar residues); it reads PASQETSLGQDTSDPASTRTGATASP. Threonine 401 carries the phosphothreonine modification. The span at 466–482 shows a compositional bias: polar residues; that stretch reads STSGLEDSCTETISSSG. Position 487 is a phosphothreonine (threonine 487). Phosphoserine occurs at positions 527 and 546. Over residues 545–554 the composition is skewed to polar residues; that stretch reads DSPQSVQAGS. The KH domain occupies 561-625; the sequence is LIIWEIEVPK…HHVDKALNLI (65 aa). A Tudor domain is found at 712-771; that stretch reads PVEITVICAAPGADGAWWRAQVVASYEETNEVEIRYVDYGGYKRVKVDVLRQIRSDFVTL.

In terms of assembly, interacts with SLC8A3. Interacts with CFAP91. Interacts with CLPB. Interacts with NDUFS1. Highest expression in testis, heart, liver, skeletal muscle, intestine and kidney, followed by brain and lung. No expression in spleen. Isoform 1/D-AKAP1A is expressed predominantly in testis whereas isoform 4/D-AKAP1D is expressed primarily in liver. Expression is decreased in hearts of diabetic mice (at protein level).

It is found in the mitochondrion outer membrane. Its subcellular location is the mitochondrion. It localises to the endoplasmic reticulum. Differentially targeted protein that binds to type I and II regulatory subunits of protein kinase A. Anchors them to the cytoplasmic face of the mitochondrial outer membrane or allows them to reside in the endoplasmic reticulum. Involved in mitochondrial-mediated antiviral innate immunity. Promotes translocation of NDUFS1 into mitochondria to regulate mitochondrial membrane respiratory chain NADH dehydrogenase (Complex I) activity. Under diabetic conditions, myocardial AKAP1 expression decreases which blocks the translocation of NDUFS1 from the cytosol to mitochondria. Reduction of NDUFS1 in mitochondria decreases ATP production and increases mitochondrial ROS level, which causes mitochondrial dysfunction and cell apoptosis, respectively, thereby leading to cardiac dysfunction. The polypeptide is A-kinase anchor protein 1, mitochondrial (Mus musculus (Mouse)).